Reading from the N-terminus, the 124-residue chain is Protein MT1307 (124 aa).

The tat-type signal signal peptide spans 1 to 35 (MTTMITLRRRFAVAVAGVATAAATTVTLAPAPANA).

It to M.tuberculosis Rv1813c. Post-translationally, predicted to be exported by the Tat system. The position of the signal peptide cleavage has not been experimentally proven.

This Mycobacterium tuberculosis (strain CDC 1551 / Oshkosh) protein is Protein MT1307.